The chain runs to 196 residues: Large ribosomal subunit protein uL18 (196 aa).

This sequence belongs to the universal ribosomal protein uL18 family. As to quaternary structure, part of the 50S ribosomal subunit. Contacts the 5S and 23S rRNAs.

Its function is as follows. This is one of the proteins that bind and probably mediate the attachment of the 5S RNA into the large ribosomal subunit, where it forms part of the central protuberance. This is Large ribosomal subunit protein uL18 from Thermofilum pendens (strain DSM 2475 / Hrk 5).